Reading from the N-terminus, the 376-residue chain is Lipoprotein p33 (376 aa).

A signal peptide spans 1–30 (MKIKKIKLLKALALTGAFGIVATVPVIVYS). Cys31 carries the N-palmitoyl cysteine lipid modification. Cys31 carries S-diacylglycerol cysteine lipidation. Residues 35 to 59 (DNNGGTGDNNTGGGGSGTDQQQGTT) are disordered. Residues 38–51 (GGTGDNNTGGGGSG) show a composition bias toward gly residues.

It belongs to the p35 lipoprotein family.

The protein localises to the cell membrane. The polypeptide is Lipoprotein p33 (Malacoplasma penetrans (Mycoplasma penetrans)).